Here is a 24-residue protein sequence, read N- to C-terminus: Brevinin-1Ba (24 aa).

Cysteines 18 and 24 form a disulfide.

Expressed by the skin glands.

The protein resides in the secreted. Functionally, antibacterial activity against Gram-positive bacterium S.aureus. The protein is Brevinin-1Ba of Lithobates berlandieri (Rio Grande leopard frog).